The chain runs to 766 residues: BMP/retinoic acid-inducible neural-specific protein 3 (766 aa).

The signal sequence occupies residues 1-33 (MIWRRRAGAELSSLMALWEWIVLSLHCWVLAVA). The region spanning 74–264 (RYKIYREFGR…FVQAALSYIA (191 aa)) is the MACPF domain. 6 N-linked (GlcNAc...) asparagine glycosylation sites follow: Asn-168, Asn-337, Asn-456, Asn-562, Asn-609, and Asn-641.

It belongs to the BRINP family. In terms of tissue distribution, expressed in the brain. Weakly expressed in embryonic stem (ES) cells. Expressed in ES-derived neural stem cells (NSCs) and neuronal cells.

Its subcellular location is the secreted. The protein localises to the mitochondrion. In terms of biological role, inhibits neuronal cell proliferation by negative regulation of the cell cycle transition. Promotes pituitary gonadotrope cell proliferation, migration and invasion, when overexpressed. May play a role in cell pituitary tumor development. In Mus musculus (Mouse), this protein is BMP/retinoic acid-inducible neural-specific protein 3 (Brinp3).